A 507-amino-acid polypeptide reads, in one-letter code: RNA-splicing ligase RtcB homolog (507 aa).

Asp121, Cys124, His229, His261, and His355 together coordinate Mn(2+). 228 to 232 (NHYAE) is a binding site for GMP. Residues 355 to 356 (HN), 404 to 407 (GGTM), Ser411, 430 to 433 (HGAG), and Lys506 contribute to the GMP site. His430 serves as the catalytic GMP-histidine intermediate.

It belongs to the RtcB family. Catalytic component of the tRNA-splicing ligase complex. Mn(2+) is required as a cofactor.

The catalysed reaction is a 3'-end 3'-phospho-ribonucleotide-RNA + a 5'-end dephospho-ribonucleoside-RNA + GTP = a ribonucleotidyl-ribonucleotide-RNA + GMP + diphosphate. It catalyses the reaction a 3'-end 2',3'-cyclophospho-ribonucleotide-RNA + a 5'-end dephospho-ribonucleoside-RNA + GTP + H2O = a ribonucleotidyl-ribonucleotide-RNA + GMP + diphosphate + H(+). In terms of biological role, catalytic subunit of the tRNA-splicing ligase complex that acts by directly joining spliced tRNA halves to mature-sized tRNAs by incorporating the precursor-derived splice junction phosphate into the mature tRNA as a canonical 3',5'-phosphodiester. May act as an RNA ligase with broad substrate specificity, and may function toward other RNAs. The polypeptide is RNA-splicing ligase RtcB homolog (Plasmodium yoelii yoelii).